The primary structure comprises 347 residues: S-adenosylmethionine:tRNA ribosyltransferase-isomerase (347 aa).

It belongs to the QueA family. Monomer.

Its subcellular location is the cytoplasm. It carries out the reaction 7-aminomethyl-7-carbaguanosine(34) in tRNA + S-adenosyl-L-methionine = epoxyqueuosine(34) in tRNA + adenine + L-methionine + 2 H(+). It functions in the pathway tRNA modification; tRNA-queuosine biosynthesis. Its function is as follows. Transfers and isomerizes the ribose moiety from AdoMet to the 7-aminomethyl group of 7-deazaguanine (preQ1-tRNA) to give epoxyqueuosine (oQ-tRNA). The polypeptide is S-adenosylmethionine:tRNA ribosyltransferase-isomerase (Pseudomonas aeruginosa (strain UCBPP-PA14)).